The sequence spans 1420 residues: Mediator of RNA polymerase II transcription subunit 13 (1420 aa).

Phosphoserine is present on residues serine 370, serine 375, and serine 425. Polar residues predominate over residues 416–427 (TTVSNDLENSPL). The interval 416 to 511 (TTVSNDLENS…TNESNKSISD (96 aa)) is disordered. A compositionally biased stretch (basic and acidic residues) spans 429–439 (TELEANGRSLE). Residues 440–453 (KVNNSVSKTGSVDT) are compositionally biased toward polar residues. The segment covering 454-484 (LHNKEGTLEQREQNENLPSDKSDSMVDKELF) has biased composition (basic and acidic residues). A compositionally biased stretch (low complexity) spans 494 to 508 (GDSNKSNSTNESNKS). Position 601 is a phosphothreonine (threonine 601). Serine 608 is modified (phosphoserine; by PKA). Position 636 is a phosphoserine (serine 636). Residues 653–691 (LSSSEEEEDEEENGSSDEDLKSLNVRDDMKPSDNISTNT) are disordered. The segment covering 655–669 (SSEEEEDEEENGSSD) has biased composition (acidic residues). A compositionally biased stretch (basic and acidic residues) spans 670 to 683 (EDLKSLNVRDDMKP). Residue serine 748 is modified to Phosphoserine.

It belongs to the Mediator complex subunit 13 family. As to quaternary structure, component of the SRB8-11 complex which consists of SRB8, SSN2/SRB9, SSN3/SRB10 and SSN8/SRB11. The SRB8-11 complex associates with the Mediator complex. The SSN3/SRB10 and SSN8/SRB11 kinase-cyclin pair also associate with the RNA polymerase II holoenzyme. Phosphorylated. PKA-dependent phosphorylation at 'Ser-608' is enhanced by activation of the RAS signaling pathway.

It localises to the nucleus. Component of the SRB8-11 complex. The SRB8-11 complex is a regulatory module of the Mediator complex which is itself involved in regulation of basal and activated RNA polymerase II-dependent transcription. The SRB8-11 complex may be involved in the transcriptional repression of a subset of genes regulated by Mediator. It may inhibit the association of the Mediator complex with RNA polymerase II to form the holoenzyme complex. The SRB8-11 complex phosphorylates the C-terminal domain (CTD) of the largest subunit of RNA polymerase II RPB1 at serines 2 and 5. The polypeptide is Mediator of RNA polymerase II transcription subunit 13 (SSN2) (Saccharomyces cerevisiae (strain ATCC 204508 / S288c) (Baker's yeast)).